We begin with the raw amino-acid sequence, 399 residues long: Acetate kinase 2 (399 aa).

Residue asparagine 10 participates in Mg(2+) binding. Position 17 (lysine 17) interacts with ATP. Residue arginine 89 participates in substrate binding. Aspartate 146 acts as the Proton donor/acceptor in catalysis. ATP contacts are provided by residues 206 to 210 (HLGNG), 281 to 283 (DCR), and 329 to 333 (GIGEN). Position 384 (glutamate 384) interacts with Mg(2+).

Belongs to the acetokinase family. In terms of assembly, homodimer. Requires Mg(2+) as cofactor. The cofactor is Mn(2+).

It is found in the cytoplasm. It carries out the reaction acetate + ATP = acetyl phosphate + ADP. It functions in the pathway metabolic intermediate biosynthesis; acetyl-CoA biosynthesis; acetyl-CoA from acetate: step 1/2. Catalyzes the formation of acetyl phosphate from acetate and ATP. Can also catalyze the reverse reaction. This Neisseria meningitidis serogroup A / serotype 4A (strain DSM 15465 / Z2491) protein is Acetate kinase 2.